Reading from the N-terminus, the 226-residue chain is Histone H1.5 (226 aa).

Residues 1 to 16 are compositionally biased toward low complexity; the sequence is MSETAPAETATPAPVE. The disordered stretch occupies residues 1-44; the sequence is MSETAPAETATPAPVEKSPAKKKATKKAAGAGAAKRKATGPPVS. Ser2 is subject to N-acetylserine; partial. Position 2 is a phosphoserine (Ser2). Residue Thr11 is modified to Phosphothreonine; by GSK3. Lys17 carries the post-translational modification N6-acetyllysine. At Ser18 the chain carries Phosphoserine. Position 27 is an N6-methyllysine (Lys27). N6-(beta-hydroxybutyryl)lysine; alternate is present on Lys37. Position 37 is an N6-succinyllysine; alternate (Lys37). At Thr39 the chain carries Phosphothreonine. The H15 domain occupies 39–112; the sequence is TGPPVSELIT…GASGSFKLNK (74 aa). Lys49 is modified (N6-acetyllysine). Lys55 is modified (N6-(beta-hydroxybutyryl)lysine). Citrulline is present on Arg57. N6-(beta-hydroxybutyryl)lysine is present on Lys67. Lys78 bears the N6-acetyllysine mark. Residues Lys88, Lys93, and Lys109 each carry the N6-(beta-hydroxybutyryl)lysine modification. The interval 98–226 is disordered; sequence QTKGTGASGS…KAKKAAAKKK (129 aa). Residues 122-133 show a composition bias toward basic residues; the sequence is KAKKAGAAKAKK. Residues Thr138 and Thr155 each carry the phosphothreonine modification. Residues 140 to 161 show a composition bias toward basic residues; the sequence is KKAKKAAGAKKAVKKTPKKAKK. Lys168 is subject to N6-acetyllysine. Basic residues predominate over residues 169-187; sequence KVAKSPKKAKAAAKPKKAT. Ser173 and Ser189 each carry phosphoserine. Residues 194–226 show a composition bias toward basic residues; it reads KAVKPKAAKPKAAKPKAAKPKAAKAKKAAAKKK.

This sequence belongs to the histone H1/H5 family. Interacts with MSX1. H1 histones are progressively phosphorylated during the cell cycle, becoming maximally phosphorylated during late G2 phase and M phase, and being dephosphorylated sharply thereafter. Phosphorylated at Thr-11 by GSK3B during mitosis in prometaphase and dephosphorylated in telophase. In terms of processing, citrullination at Arg-57 (H1R54ci) by PADI4 takes place within the DNA-binding site of H1 and results in its displacement from chromatin and global chromatin decondensation, thereby promoting pluripotency and stem cell maintenance. As to expression, ubiquitous. Expressed in the majority of the cell lines tested and in testis.

It localises to the nucleus. The protein resides in the chromosome. Histone H1 protein binds to linker DNA between nucleosomes forming the macromolecular structure known as the chromatin fiber. Histones H1 are necessary for the condensation of nucleosome chains into higher-order structured fibers. Also acts as a regulator of individual gene transcription through chromatin remodeling, nucleosome spacing and DNA methylation. This chain is Histone H1.5, found in Homo sapiens (Human).